The primary structure comprises 761 residues: MLPSENGDEDQGSQKPKRAYLRKGEGTARFRMTRRSAPLTSSPAINLPRFTPTNSAPSSARTIDSGIPHDDDTRPPTTASLPLDQPSVLESHDSGNRSESNERREEDNVEVVSAMQSYVPGDRSSSVLETCSKVSEEATQLRAEADRITAQANFINSMKSVSITPSSYSSNISGPIYQSTPKGSLRHDDLSDDPTFLPPPLVPPRNHSPQTLSSLASSGSLDTPQARPLAGNRLNMMVQNEAQTGISLLNNPRRQPMLPAHHHPSQKENVPERKAPSEHVYDEPLQIQRPHRRNREEQRQKHNLMLQLRDTIAHLDYASECVWSTRKKQEEAYAKRMKELEEDFESKMQMIQEDNTSEEERLKRERRDIERDRKILQKGIGEREKEHTQMIAKLREKLSNSESQNAKLRQDKRAVEEKMKKFIEENEKLTKDLNRNRATCQRLEKHIKQLRTEKEKDDREKEMFAKVAMNRKAAASGIATGSAASSRLPSVSSLASSMKTGSTGKGRTVSFADDEPEEQTLEAGEETMQPEFIMRPYETKQSRFGTSTMYRDSIGETTRVTSTIANGLLFEYSNGDFRWMNRQNSVEIYRIAVDKSIIVNLLQYNISFIYFFQRQLEVWRPGNNTTLISVKRREVRTELHCENGTYYTEMFDRNGRYVTKDFCRPEVFKDIPPGSACSYRDGGTRYVEYTAPEDFELVEPEYRLRWYQGKVMVCKIIKRPRCNEKTLRVQVDVTTGSGILEEVESQLKDGQSQKTTVFPWS.

Positions 1 to 11 are enriched in acidic residues; the sequence is MLPSENGDEDQ. Residues 1-109 are disordered; sequence MLPSENGDED…SNERREEDNV (109 aa). A compositionally biased stretch (polar residues) spans 51 to 62; it reads TPTNSAPSSART. The segment covering 90–106 has biased composition (basic and acidic residues); the sequence is ESHDSGNRSESNERREE. Positions 129-156 form a coiled coil; the sequence is ETCSKVSEEATQLRAEADRITAQANFIN. The span at 164 to 173 shows a compositional bias: low complexity; sequence TPSSYSSNIS. Disordered regions lie at residues 164 to 228 and 252 to 280; these read TPSS…QARP and PRRQPMLPAHHHPSQKENVPERKAPSEHV. Residues 210–223 show a composition bias toward polar residues; the sequence is QTLSSLASSGSLDT. A compositionally biased stretch (basic and acidic residues) spans 265 to 280; the sequence is SQKENVPERKAPSEHV. Residues 326-464 adopt a coiled-coil conformation; sequence RKKQEEAYAK…EKDDREKEMF (139 aa). The span at 479–497 shows a compositional bias: low complexity; sequence ATGSAASSRLPSVSSLASS. Residues 479-510 are disordered; that stretch reads ATGSAASSRLPSVSSLASSMKTGSTGKGRTVS.

The protein resides in the cytoplasm. It localises to the cytoskeleton. Its subcellular location is the microtubule organizing center. It is found in the centrosome. In terms of biological role, required for centrosome duplication. Plays a central role in determining centrosome size. This Caenorhabditis briggsae protein is Spindle assembly abnormal protein 4 (sas-4).